The sequence spans 364 residues: DNA replication and repair protein RecF (364 aa).

30–37 (GNNAQGKT) contributes to the ATP binding site.

The protein belongs to the RecF family.

Its subcellular location is the cytoplasm. Its function is as follows. The RecF protein is involved in DNA metabolism; it is required for DNA replication and normal SOS inducibility. RecF binds preferentially to single-stranded, linear DNA. It also seems to bind ATP. In Clostridium botulinum (strain Langeland / NCTC 10281 / Type F), this protein is DNA replication and repair protein RecF.